A 246-amino-acid polypeptide reads, in one-letter code: Proteasome subunit alpha (246 aa).

The protein belongs to the peptidase T1A family. The 20S proteasome core is composed of 14 alpha and 14 beta subunits that assemble into four stacked heptameric rings, resulting in a barrel-shaped structure. The two inner rings, each composed of seven catalytic beta subunits, are sandwiched by two outer rings, each composed of seven alpha subunits. The catalytic chamber with the active sites is on the inside of the barrel. Has a gated structure, the ends of the cylinder being occluded by the N-termini of the alpha-subunits. Is capped by the proteasome-associated ATPase, ARC. Can also interact with the bacterial proteasome activator Bpa through the C-terminal hydrophobic-tyrosine-X motif (HbYX motif) of Bpa; Bpa forms a homooligomeric ring-like structure which stacks co-axially with the proteasomal alpha-rings. Pupylated at an undetermined lysine residue by the prokaryotic ubiquitin-like protein Pup with the help of the ligase PafA, which leads to its degradation by the proteasome and thereby constitutes a negative auto-regulation.

The protein localises to the cytoplasm. Its pathway is protein degradation; proteasomal Pup-dependent pathway. With respect to regulation, the formation of the proteasomal ATPase ARC-20S proteasome complex, likely via the docking of the C-termini of ARC into the intersubunit pockets in the alpha-rings, may trigger opening of the gate for substrate entry. Interconversion between the open-gate and close-gate conformations leads to a dynamic regulation of the 20S proteasome proteolysis activity. PPS auto-regulates its own activity via pupylation and degradation of its components. Peptidolytic activity is inhibited by N-acetyl-Leu-Leu-norleucinal (Ac-LLnL) in vitro. Component of the proteasome core, a large protease complex with broad specificity involved in protein degradation. The M.smegmatis proteasome is able to cleave oligopeptides after hydrophobic residues, thus displaying chymotrypsin-like activity. In complex with the ATPase Mpa, degrades protein targets conjugated to a prokaryotic ubiquitin-like protein (Pup). Identified substrates of the M.smegmatis proteasome are the pupylated SodA and Ino1 proteins. The Pup-proteasome system (PPS) is essential for survival under starvation; PPS likely functions to recycle amino acids under nitrogen starvation, thereby enabling the cell to maintain basal metabolic activities. This is Proteasome subunit alpha from Mycolicibacterium smegmatis (strain ATCC 700084 / mc(2)155) (Mycobacterium smegmatis).